The chain runs to 64 residues: Large ribosomal subunit protein uL30 (64 aa).

Belongs to the universal ribosomal protein uL30 family. As to quaternary structure, part of the 50S ribosomal subunit.

The polypeptide is Large ribosomal subunit protein uL30 (Bdellovibrio bacteriovorus (strain ATCC 15356 / DSM 50701 / NCIMB 9529 / HD100)).